We begin with the raw amino-acid sequence, 539 residues long: Alpha-aminoadipic semialdehyde dehydrogenase (539 aa).

A mitochondrion-targeting transit peptide spans 1-26 (MWRVPGLLCVRVARKSKFSGSWNRPA). An N6-acetyllysine; alternate modification is found at Lys94. Lys94 carries the N6-succinyllysine; alternate modification. Residues 192-194 (TAF), Lys218, 258-259 (GT), 274-275 (GS), 274-279 (GSTQVG), and 296-297 (EL) contribute to the NAD(+) site. Glu296 (proton acceptor) is an active-site residue. Cys330 (nucleophile) is an active-site residue. Position 331 (Thr331) interacts with (S)-2-amino-6-oxohexanoate. Glu427 is a binding site for NAD(+). Lys462 is subject to N6-acetyllysine. The (S)-2-amino-6-oxohexanoate site is built by Gly489 and Ala490. An N6-acetyllysine modification is found at Lys500. Lys537 carries the N6-succinyllysine modification.

It belongs to the aldehyde dehydrogenase family. In terms of assembly, homotetramer.

It localises to the cytoplasm. The protein resides in the cytosol. It is found in the nucleus. Its subcellular location is the mitochondrion. The enzyme catalyses nonanal + NAD(+) + H2O = nonanoate + NADH + 2 H(+). It carries out the reaction (S)-2-amino-6-oxohexanoate + NAD(+) + H2O = L-2-aminoadipate + NADH + 2 H(+). It catalyses the reaction betaine aldehyde + NAD(+) + H2O = glycine betaine + NADH + 2 H(+). The catalysed reaction is an aldehyde + NAD(+) + H2O = a carboxylate + NADH + 2 H(+). The enzyme catalyses hexanal + NAD(+) + H2O = hexanoate + NADH + 2 H(+). It carries out the reaction octanal + NAD(+) + H2O = octanoate + NADH + 2 H(+). It catalyses the reaction (E)-non-2-enal + NAD(+) + H2O = (E)-non-2-enoate + NADH + 2 H(+). The catalysed reaction is (E)-4-hydroxynon-2-enal + NAD(+) + H2O = (E)-4-hydroxynon-2-enoate + NADH + 2 H(+). It functions in the pathway amine and polyamine biosynthesis; betaine biosynthesis via choline pathway; betaine from betaine aldehyde: step 1/1. Multifunctional enzyme mediating important protective effects. Metabolizes betaine aldehyde to betaine, an important cellular osmolyte and methyl donor. Protects cells from oxidative stress by metabolizing a number of lipid peroxidation-derived aldehydes. Involved in lysine catabolism. This is Alpha-aminoadipic semialdehyde dehydrogenase (ALDH7A1) from Bos taurus (Bovine).